Reading from the N-terminus, the 496-residue chain is ATP synthase subunit beta (496 aa).

155–162 contributes to the ATP binding site; sequence GGAGVGKT.

This sequence belongs to the ATPase alpha/beta chains family. F-type ATPases have 2 components, CF(1) - the catalytic core - and CF(0) - the membrane proton channel. CF(1) has five subunits: alpha(3), beta(3), gamma(1), delta(1), epsilon(1). CF(0) has three main subunits: a(1), b(2) and c(9-12). The alpha and beta chains form an alternating ring which encloses part of the gamma chain. CF(1) is attached to CF(0) by a central stalk formed by the gamma and epsilon chains, while a peripheral stalk is formed by the delta and b chains.

Its subcellular location is the cell membrane. It catalyses the reaction ATP + H2O + 4 H(+)(in) = ADP + phosphate + 5 H(+)(out). Functionally, produces ATP from ADP in the presence of a proton gradient across the membrane. The catalytic sites are hosted primarily by the beta subunits. The polypeptide is ATP synthase subunit beta (Karelsulcia muelleri (strain GWSS) (Sulcia muelleri)).